The following is a 447-amino-acid chain: Oxysterols receptor LXR-alpha (447 aa).

Disordered stretches follow at residues 1–37 and 65–88; these read MSLW…GGSS and ALLT…KKGP. Residues 1–96 are transactivation AF-1; required for ligand-independent transactivation function; that stretch reads MSLWLGAPVP…GPAPKMLGNE (96 aa). Low complexity predominate over residues 24 to 37; it reads GAQDASSQAQGGSS. Residues 95 to 170 constitute a DNA-binding region (nuclear receptor); sequence NELCSVCGDK…AGMREECVLS (76 aa). 2 NR C4-type zinc fingers span residues 98–118 and 134–158; these read CSVC…CEGC and CHSG…LRKC. Positions 180–202 are disordered; it reads KRQEEEQAHATSLPPRASSPPQI. The segment at 205 to 447 is transactivation AF-2; required for ligand-dependent transactivation function; mediates interaction with CCAR2; sequence QLSPEQLGMI…LLSEIWDVHE (243 aa). Residues 209–447 form the NR LBD domain; the sequence is EQLGMIEKLV…LLSEIWDVHE (239 aa).

The protein belongs to the nuclear hormone receptor family. NR1 subfamily. Heterodimer of NR1H3 and RXR (retinoic acid receptor). Interacts with CCAR2 (via N-terminus) in a ligand-independent manner. Interacts with SIRT1 and this interaction is inhibited by CCAR2. Interacts with GPS2. Ubiquitinated by UBR5, leading to its degradation: UBR5 specifically recognizes and binds ligand-bound NR1H3 when it is not associated with coactivators (NCOAs). In presence of NCOAs, the UBR5-degron is not accessible, preventing its ubiquitination and degradation. In terms of tissue distribution, visceral organs specific expression. Strong expression was found in liver, kidney and intestine followed by spleen and to a lesser extent the adrenals.

The protein localises to the nucleus. It localises to the cytoplasm. Functionally, nuclear receptor that exhibits a ligand-dependent transcriptional activation activity. Interaction with retinoic acid receptor (RXR) shifts RXR from its role as a silent DNA-binding partner to an active ligand-binding subunit in mediating retinoid responses through target genes defined by LXRES. LXRES are DR4-type response elements characterized by direct repeats of two similar hexanuclotide half-sites spaced by four nucleotides. Plays an important role in the regulation of cholesterol homeostasis, regulating cholesterol uptake through MYLIP-dependent ubiquitination of LDLR, VLDLR and LRP8. Interplays functionally with RORA for the regulation of genes involved in liver metabolism. Induces LPCAT3-dependent phospholipid remodeling in endoplasmic reticulum (ER) membranes of hepatocytes, driving SREBF1 processing and lipogenesis. Via LPCAT3, triggers the incorporation of arachidonate into phosphatidylcholines of ER membranes, increasing membrane dynamics and enabling triacylglycerols transfer to nascent very low-density lipoprotein (VLDL) particles. Via LPCAT3 also counteracts lipid-induced ER stress response and inflammation, likely by modulating SRC kinase membrane compartmentalization and limiting the synthesis of lipid inflammatory mediators. The polypeptide is Oxysterols receptor LXR-alpha (NR1H3) (Homo sapiens (Human)).